We begin with the raw amino-acid sequence, 534 residues long: CTP synthase (534 aa).

The tract at residues 1 to 266 is amidoligase domain; it reads MKTKFIFVTG…DEQVVEKLNI (266 aa). Ser-14 is a binding site for CTP. A UTP-binding site is contributed by Ser-14. ATP-binding positions include 15-20 and Asp-72; that span reads SIGKGL. Mg(2+) contacts are provided by Asp-72 and Glu-140. CTP contacts are provided by residues 147 to 149, 187 to 192, and Lys-223; these read DIE and KTKPTQ. UTP contacts are provided by residues 187-192 and Lys-223; that span reads KTKPTQ. Positions 292–534 constitute a Glutamine amidotransferase type-1 domain; the sequence is RIAIVGKYVN…IAAALHNIKA (243 aa). Gly-354 lines the L-glutamine pocket. Cys-381 acts as the Nucleophile; for glutamine hydrolysis in catalysis. L-glutamine contacts are provided by residues 382 to 385, Glu-405, and Arg-462; that span reads LGMQ. Active-site residues include His-507 and Glu-509.

This sequence belongs to the CTP synthase family. In terms of assembly, homotetramer.

The enzyme catalyses UTP + L-glutamine + ATP + H2O = CTP + L-glutamate + ADP + phosphate + 2 H(+). It carries out the reaction L-glutamine + H2O = L-glutamate + NH4(+). It catalyses the reaction UTP + NH4(+) + ATP = CTP + ADP + phosphate + 2 H(+). It functions in the pathway pyrimidine metabolism; CTP biosynthesis via de novo pathway; CTP from UDP: step 2/2. Its activity is regulated as follows. Allosterically activated by GTP, when glutamine is the substrate; GTP has no effect on the reaction when ammonia is the substrate. The allosteric effector GTP functions by stabilizing the protein conformation that binds the tetrahedral intermediate(s) formed during glutamine hydrolysis. Inhibited by the product CTP, via allosteric rather than competitive inhibition. Its function is as follows. Catalyzes the ATP-dependent amination of UTP to CTP with either L-glutamine or ammonia as the source of nitrogen. Regulates intracellular CTP levels through interactions with the four ribonucleotide triphosphates. The protein is CTP synthase of Geotalea uraniireducens (strain Rf4) (Geobacter uraniireducens).